Consider the following 78-residue polypeptide: uncharacterized protein (78 aa).

The next 2 membrane-spanning stretches (helical) occupy residues 13–35 and 50–72; these read AGVGCVLMLMIIALVVFMLPTGI and GTTFGILMLAALPPLTGAIFYYF.

It localises to the cell membrane. This is an uncharacterized protein from Pasteurella multocida (strain Pm70).